We begin with the raw amino-acid sequence, 550 residues long: Chaperonin GroEL (550 aa).

ATP contacts are provided by residues 30–33 (TLGP), K51, 87–91 (DGTTT), G415, and D496. Residues 528–550 (EGGDMPAMPPGGMGGMGGMGGMM) are disordered. Residues 538-550 (GGMGGMGGMGGMM) show a composition bias toward gly residues.

The protein belongs to the chaperonin (HSP60) family. As to quaternary structure, forms a cylinder of 14 subunits composed of two heptameric rings stacked back-to-back. Interacts with the co-chaperonin GroES.

It is found in the cytoplasm. The catalysed reaction is ATP + H2O + a folded polypeptide = ADP + phosphate + an unfolded polypeptide.. Together with its co-chaperonin GroES, plays an essential role in assisting protein folding. The GroEL-GroES system forms a nano-cage that allows encapsulation of the non-native substrate proteins and provides a physical environment optimized to promote and accelerate protein folding. The sequence is that of Chaperonin GroEL from Chlorobium phaeobacteroides (strain BS1).